The sequence spans 289 residues: D-alanine aminotransferase (289 aa).

Tyr31 lines the substrate pocket. Arg50 provides a ligand contact to pyridoxal 5'-phosphate. Substrate contacts are provided by Arg99 and His101. Residue Lys147 is modified to N6-(pyridoxal phosphate)lysine. A pyridoxal 5'-phosphate-binding site is contributed by Glu179.

The protein belongs to the class-IV pyridoxal-phosphate-dependent aminotransferase family. In terms of assembly, homodimer. Pyridoxal 5'-phosphate is required as a cofactor.

The enzyme catalyses D-alanine + 2-oxoglutarate = D-glutamate + pyruvate. Functionally, acts on the D-isomers of alanine, leucine, aspartate, glutamate, aminobutyrate, norvaline and asparagine. The enzyme transfers an amino group from a substrate D-amino acid to the pyridoxal phosphate cofactor to form pyridoxamine and an alpha-keto acid in the first half-reaction. The second half-reaction is the reverse of the first, transferring the amino group from the pyridoxamine to a second alpha-keto acid to form the product D-amino acid via a ping-pong mechanism. This is an important process in the formation of D-alanine and D-glutamate, which are essential bacterial cell wall components. The sequence is that of D-alanine aminotransferase (dat) from Listeria monocytogenes serovar 1/2a (strain ATCC BAA-679 / EGD-e).